The primary structure comprises 175 residues: Pancreatic beta cell growth factor (175 aa).

An N-terminal signal peptide occupies residues 1–26 (MMLPMTLCRMSWMLLSCLMFLSWVEG). Residues 38–175 (ITCPQGSVAY…ELPYICKFKV (138 aa)) enclose the C-type lectin domain. Disulfide bonds link cysteine 40–cysteine 51, cysteine 68–cysteine 171, and cysteine 146–cysteine 163.

Expressed only in CW animals pancreas and to a lesser extent in duodenum. In pancreas it is found in acinar cells, but not in islets.

It localises to the secreted. Functionally, constituent of ilotropin, which is a partially purified preparation of cellophane wrapping (CW) pancreata. Capable of initiating duct cell proliferation, a prerequisite for islet neogenesis. The chain is Pancreatic beta cell growth factor (INGAP) from Mesocricetus auratus (Golden hamster).